The following is a 240-amino-acid chain: Uridylate kinase (240 aa).

14 to 17 serves as a coordination point for ATP; the sequence is KLSG. Residue Gly56 coordinates UMP. The ATP site is built by Gly57 and Arg61. Residues Asp76 and 137–144 each bind UMP; that span reads TGNPFFTT. ATP contacts are provided by Thr164, Tyr170, and Asp173.

The protein belongs to the UMP kinase family. In terms of assembly, homohexamer.

The protein resides in the cytoplasm. The enzyme catalyses UMP + ATP = UDP + ADP. Its pathway is pyrimidine metabolism; CTP biosynthesis via de novo pathway; UDP from UMP (UMPK route): step 1/1. Inhibited by UTP. In terms of biological role, catalyzes the reversible phosphorylation of UMP to UDP. The chain is Uridylate kinase from Acidovorax sp. (strain JS42).